A 310-amino-acid polypeptide reads, in one-letter code: ADP-L-glycero-D-manno-heptose-6-epimerase (310 aa).

NADP(+)-binding positions include 10–11, 31–32, Lys-38, Lys-53, 75–79, and Asn-92; these read FI, DN, and EGACS. Tyr-140 acts as the Proton acceptor in catalysis. Lys-144 provides a ligand contact to NADP(+). Asn-169 lines the substrate pocket. 2 residues coordinate NADP(+): Val-170 and Lys-178. Lys-178 serves as the catalytic Proton acceptor. Substrate contacts are provided by residues Ser-180, His-187, 201-204, Arg-209, and Tyr-272; that span reads FSGS.

The protein belongs to the NAD(P)-dependent epimerase/dehydratase family. HldD subfamily. Homopentamer. The cofactor is NADP(+).

It carries out the reaction ADP-D-glycero-beta-D-manno-heptose = ADP-L-glycero-beta-D-manno-heptose. Its pathway is nucleotide-sugar biosynthesis; ADP-L-glycero-beta-D-manno-heptose biosynthesis; ADP-L-glycero-beta-D-manno-heptose from D-glycero-beta-D-manno-heptose 7-phosphate: step 4/4. Catalyzes the interconversion between ADP-D-glycero-beta-D-manno-heptose and ADP-L-glycero-beta-D-manno-heptose via an epimerization at carbon 6 of the heptose. This Pectobacterium atrosepticum (strain SCRI 1043 / ATCC BAA-672) (Erwinia carotovora subsp. atroseptica) protein is ADP-L-glycero-D-manno-heptose-6-epimerase.